A 362-amino-acid chain; its full sequence is Probable secreted beta-glucosidase UTH1 (362 aa).

Residues 1-17 form the signal peptide; that stretch reads MKLSALLALSASTAVLA.

This sequence belongs to the SUN family.

It localises to the mitochondrion outer membrane. Its subcellular location is the secreted. The protein resides in the cell wall. Functionally, involved in aging, oxidative stress response, and in the regulation of mitochondrial biogenesis. Inactivation of UTH1 increases life span, leads to higher resistance to heat stress and to hydrogen peroxide, and increases sensitivity to the superoxide radical-generating drug paraquat and to copper. Also required for the selective autophagic degradation of mitochondria (mitophagy) in response to nitrogen starvation. Involved in the remodeling of the cell wall during the various phases of yeast culture development and under various environmental conditions and plays a role in septation. Involved in cell sensitivity to boric acid. In Saccharomyces cerevisiae (strain RM11-1a) (Baker's yeast), this protein is Probable secreted beta-glucosidase UTH1 (UTH1).